The following is a 447-amino-acid chain: NADP-specific glutamate dehydrogenase (447 aa).

Residues Lys92, Gln113, and Lys116 each contribute to the substrate site. The active-site Proton donor is the Lys128. Gly167 provides a ligand contact to substrate. Positions 211 and 242 each coordinate NADP(+). Ser380 is a binding site for substrate.

It belongs to the Glu/Leu/Phe/Val dehydrogenases family. Homohexamer.

The catalysed reaction is L-glutamate + NADP(+) + H2O = 2-oxoglutarate + NH4(+) + NADPH + H(+). Functionally, catalyzes the reversible oxidative deamination of glutamate to alpha-ketoglutarate and ammonia. This is NADP-specific glutamate dehydrogenase (gdhA) from Salmonella typhimurium (strain LT2 / SGSC1412 / ATCC 700720).